The primary structure comprises 211 residues: Uridine kinase (211 aa).

13–20 (GGSGSGKT) contributes to the ATP binding site.

It belongs to the uridine kinase family.

The protein resides in the cytoplasm. The enzyme catalyses uridine + ATP = UMP + ADP + H(+). It catalyses the reaction cytidine + ATP = CMP + ADP + H(+). The protein operates within pyrimidine metabolism; CTP biosynthesis via salvage pathway; CTP from cytidine: step 1/3. It functions in the pathway pyrimidine metabolism; UMP biosynthesis via salvage pathway; UMP from uridine: step 1/1. This chain is Uridine kinase, found in Lactobacillus johnsonii (strain CNCM I-12250 / La1 / NCC 533).